Consider the following 497-residue polypeptide: uncharacterized protein (497 aa).

The Ca(2+) site is built by Asp12, Thr13, and Cys52. Cys52 functions as the Nucleophile in the catalytic mechanism. Cys52 carries the post-translational modification 3-oxoalanine (Cys). His102 is a catalytic residue. Residues Asp284 and His285 each coordinate Ca(2+).

It belongs to the sulfatase family. The cofactor is Ca(2+). Post-translationally, the conversion to 3-oxoalanine (also known as C-formylglycine, FGly), of a serine or cysteine residue in prokaryotes and of a cysteine residue in eukaryotes, is critical for catalytic activity.

This is an uncharacterized protein from Escherichia coli (strain K12).